The primary structure comprises 237 residues: Uridylate kinase (237 aa).

ATP is bound at residue 9-12 (KLSG). The involved in allosteric activation by GTP stretch occupies residues 17–22 (GSQGYG). UMP is bound at residue Gly-51. 2 residues coordinate ATP: Gly-52 and Arg-56. Residues Asp-71 and 132–139 (CGNPFFTT) contribute to the UMP site. Residues Thr-159, Tyr-165, and Asp-168 each coordinate ATP.

The protein belongs to the UMP kinase family. In terms of assembly, homohexamer.

It is found in the cytoplasm. The catalysed reaction is UMP + ATP = UDP + ADP. The protein operates within pyrimidine metabolism; CTP biosynthesis via de novo pathway; UDP from UMP (UMPK route): step 1/1. With respect to regulation, allosterically activated by GTP. Inhibited by UTP. Its function is as follows. Catalyzes the reversible phosphorylation of UMP to UDP. The polypeptide is Uridylate kinase (Synechococcus sp. (strain CC9605)).